The chain runs to 417 residues: Gamma-glutamyl phosphate reductase (417 aa).

It belongs to the gamma-glutamyl phosphate reductase family.

Its subcellular location is the cytoplasm. The catalysed reaction is L-glutamate 5-semialdehyde + phosphate + NADP(+) = L-glutamyl 5-phosphate + NADPH + H(+). It functions in the pathway amino-acid biosynthesis; L-proline biosynthesis; L-glutamate 5-semialdehyde from L-glutamate: step 2/2. Its function is as follows. Catalyzes the NADPH-dependent reduction of L-glutamate 5-phosphate into L-glutamate 5-semialdehyde and phosphate. The product spontaneously undergoes cyclization to form 1-pyrroline-5-carboxylate. The sequence is that of Gamma-glutamyl phosphate reductase from Bacteroides thetaiotaomicron (strain ATCC 29148 / DSM 2079 / JCM 5827 / CCUG 10774 / NCTC 10582 / VPI-5482 / E50).